We begin with the raw amino-acid sequence, 828 residues long: Periplasmic nitrate reductase (828 aa).

The segment at residues Met-1 to Ala-31 is a signal peptide (tat-type signal). The region spanning Ile-39–Asp-95 is the 4Fe-4S Mo/W bis-MGD-type domain. The [4Fe-4S] cluster site is built by Cys-46, Cys-49, Cys-53, and Cys-81. Mo-bis(molybdopterin guanine dinucleotide)-binding positions include Lys-83, Gln-150, Asn-175, Cys-179, Trp-212–Met-219, Ser-243–His-247, Gln-262–Asp-264, Met-372, Gln-376, Asn-482, Ser-508–Asp-509, Lys-531, Asp-558, and Thr-718–Thr-727. Residue Phe-794 coordinates substrate. Mo-bis(molybdopterin guanine dinucleotide)-binding residues include Asn-802 and Lys-819.

This sequence belongs to the prokaryotic molybdopterin-containing oxidoreductase family. NasA/NapA/NarB subfamily. As to quaternary structure, component of the periplasmic nitrate reductase NapAB complex composed of NapA and NapB. Requires [4Fe-4S] cluster as cofactor. Mo-bis(molybdopterin guanine dinucleotide) serves as cofactor. Post-translationally, predicted to be exported by the Tat system. The position of the signal peptide cleavage has not been experimentally proven.

The protein resides in the periplasm. It carries out the reaction 2 Fe(II)-[cytochrome] + nitrate + 2 H(+) = 2 Fe(III)-[cytochrome] + nitrite + H2O. Its function is as follows. Catalytic subunit of the periplasmic nitrate reductase complex NapAB. Receives electrons from NapB and catalyzes the reduction of nitrate to nitrite. The chain is Periplasmic nitrate reductase from Escherichia coli O6:K15:H31 (strain 536 / UPEC).